A 228-amino-acid polypeptide reads, in one-letter code: Ribose-5-phosphate isomerase A (228 aa).

Residues 31–34, 85–88, and 97–100 contribute to the substrate site; these read TGST, DGAD, and KGGG. Glutamate 106 (proton acceptor) is an active-site residue. Lysine 124 provides a ligand contact to substrate.

It belongs to the ribose 5-phosphate isomerase family. Homodimer.

It catalyses the reaction aldehydo-D-ribose 5-phosphate = D-ribulose 5-phosphate. The protein operates within carbohydrate degradation; pentose phosphate pathway; D-ribose 5-phosphate from D-ribulose 5-phosphate (non-oxidative stage): step 1/1. In terms of biological role, catalyzes the reversible conversion of ribose-5-phosphate to ribulose 5-phosphate. The polypeptide is Ribose-5-phosphate isomerase A (Haloarcula marismortui (strain ATCC 43049 / DSM 3752 / JCM 8966 / VKM B-1809) (Halobacterium marismortui)).